The chain runs to 197 residues: ATP-dependent Clp protease proteolytic subunit 2 (197 aa).

The active-site Nucleophile is the Ser-101. Residue His-126 is part of the active site.

This sequence belongs to the peptidase S14 family. As to quaternary structure, fourteen ClpP subunits assemble into 2 heptameric rings which stack back to back to give a disk-like structure with a central cavity, resembling the structure of eukaryotic proteasomes.

The protein resides in the cytoplasm. It carries out the reaction Hydrolysis of proteins to small peptides in the presence of ATP and magnesium. alpha-casein is the usual test substrate. In the absence of ATP, only oligopeptides shorter than five residues are hydrolyzed (such as succinyl-Leu-Tyr-|-NHMec, and Leu-Tyr-Leu-|-Tyr-Trp, in which cleavage of the -Tyr-|-Leu- and -Tyr-|-Trp bonds also occurs).. Its function is as follows. Cleaves peptides in various proteins in a process that requires ATP hydrolysis. Has a chymotrypsin-like activity. Plays a major role in the degradation of misfolded proteins. This is ATP-dependent Clp protease proteolytic subunit 2 from Trichormus variabilis (strain ATCC 29413 / PCC 7937) (Anabaena variabilis).